The chain runs to 89 residues: MAISQERKNELIKEYRTHEADTGSPEVQIAVLTAEITALNEHLREHKKDHHSRRGLLKMVGRRRHLLNYLRDKDVQRYRELIKSLGIRR.

Belongs to the universal ribosomal protein uS15 family. In terms of assembly, part of the 30S ribosomal subunit. Forms a bridge to the 50S subunit in the 70S ribosome, contacting the 23S rRNA.

Functionally, one of the primary rRNA binding proteins, it binds directly to 16S rRNA where it helps nucleate assembly of the platform of the 30S subunit by binding and bridging several RNA helices of the 16S rRNA. In terms of biological role, forms an intersubunit bridge (bridge B4) with the 23S rRNA of the 50S subunit in the ribosome. The chain is Small ribosomal subunit protein uS15 from Staphylococcus saprophyticus subsp. saprophyticus (strain ATCC 15305 / DSM 20229 / NCIMB 8711 / NCTC 7292 / S-41).